A 237-amino-acid chain; its full sequence is Uridylate kinase (237 aa).

9 to 12 provides a ligand contact to ATP; the sequence is KLSG. Residue Gly-51 coordinates UMP. ATP-binding residues include Gly-52 and Arg-56. Residues Asp-71 and 132-139 each bind UMP; that span reads CGNPFFTT. Residues Thr-159, Tyr-165, and Asp-168 each coordinate ATP.

It belongs to the UMP kinase family. As to quaternary structure, homohexamer.

The protein localises to the cytoplasm. It carries out the reaction UMP + ATP = UDP + ADP. Its pathway is pyrimidine metabolism; CTP biosynthesis via de novo pathway; UDP from UMP (UMPK route): step 1/1. Its activity is regulated as follows. Inhibited by UTP. Its function is as follows. Catalyzes the reversible phosphorylation of UMP to UDP. This is Uridylate kinase from Prochlorococcus marinus (strain NATL1A).